The following is a 288-amino-acid chain: 33 kDa chaperonin (288 aa).

Intrachain disulfides connect Cys-236–Cys-238 and Cys-269–Cys-272.

This sequence belongs to the HSP33 family. Post-translationally, under oxidizing conditions two disulfide bonds are formed involving the reactive cysteines. Under reducing conditions zinc is bound to the reactive cysteines and the protein is inactive.

The protein localises to the cytoplasm. In terms of biological role, redox regulated molecular chaperone. Protects both thermally unfolding and oxidatively damaged proteins from irreversible aggregation. Plays an important role in the bacterial defense system toward oxidative stress. In Lactococcus lactis subsp. cremoris (strain SK11), this protein is 33 kDa chaperonin.